The sequence spans 209 residues: Glycerol-3-phosphate acyltransferase (209 aa).

Helical transmembrane passes span 7-27 (IELA…AIIV), 85-105 (AIIL…FFGF), 117-137 (VMFG…LFVA), 142-162 (ISSL…YLLA), and 166-183 (MAWV…FWRH).

This sequence belongs to the PlsY family. Probably interacts with PlsX.

The protein localises to the cell inner membrane. It catalyses the reaction an acyl phosphate + sn-glycerol 3-phosphate = a 1-acyl-sn-glycero-3-phosphate + phosphate. The protein operates within lipid metabolism; phospholipid metabolism. Functionally, catalyzes the transfer of an acyl group from acyl-phosphate (acyl-PO(4)) to glycerol-3-phosphate (G3P) to form lysophosphatidic acid (LPA). This enzyme utilizes acyl-phosphate as fatty acyl donor, but not acyl-CoA or acyl-ACP. The sequence is that of Glycerol-3-phosphate acyltransferase from Hydrogenovibrio crunogenus (strain DSM 25203 / XCL-2) (Thiomicrospira crunogena).